The primary structure comprises 398 residues: Cytohesin-1 (398 aa).

An N-acetylmethionine modification is found at methionine 1. Residues serine 10–alanine 67 adopt a coiled-coil conformation. Residues phenylalanine 73–asparagine 202 enclose the SEC7 domain. Positions asparagine 260–serine 377 constitute a PH domain. Residues lysine 269–threonine 277, arginine 281, tyrosine 292, arginine 302, and asparagine 351 contribute to the a 1,2-diacyl-sn-glycero-3-phospho-(1D-myo-inositol-3,4,5-trisphosphate) site. The interval arginine 388 to lysine 396 is C-terminal autoinhibitory region.

Interacts with TRIM23 and CYTIP. Interacts (via coiled-coil domain) with FRMD4A (via coiled-coil domain). Interacts with FRMD4B. Found in a complex with PARD3, CYTH1 and FRMD4A. Interacts (via N-terminal domain) with INAVA (via N-terminal domain). Ubiquitinated by SCF(FBXW11) E3 ubiquitin-protein ligase complex. Ubiquitination induces proteasomal degradation.

Its subcellular location is the cell membrane. It localises to the cytoplasm. It is found in the cytosol. The protein resides in the cell junction. The protein localises to the tight junction. Its subcellular location is the adherens junction. Promotes guanine-nucleotide exchange on ARF1, ARF5 and ARF6. Promotes the activation of ARF factors through replacement of GDP with GTP. Plays an important role in membrane trafficking, during junctional remodeling and epithelial polarization, through regulation of ARF6 activity. The chain is Cytohesin-1 (CYTH1) from Chlorocebus aethiops (Green monkey).